Reading from the N-terminus, the 367-residue chain is Phosphoribosylformylglycinamidine cyclo-ligase (367 aa).

It belongs to the AIR synthase family.

It is found in the cytoplasm. It catalyses the reaction 2-formamido-N(1)-(5-O-phospho-beta-D-ribosyl)acetamidine + ATP = 5-amino-1-(5-phospho-beta-D-ribosyl)imidazole + ADP + phosphate + H(+). Its pathway is purine metabolism; IMP biosynthesis via de novo pathway; 5-amino-1-(5-phospho-D-ribosyl)imidazole from N(2)-formyl-N(1)-(5-phospho-D-ribosyl)glycinamide: step 2/2. This Cyanothece sp. (strain PCC 7425 / ATCC 29141) protein is Phosphoribosylformylglycinamidine cyclo-ligase.